A 167-amino-acid chain; its full sequence is Leptin (167 aa).

The N-terminal stretch at Met-1 to Ala-21 is a signal peptide. A disulfide bond links Cys-117 and Cys-167.

It belongs to the leptin family.

The protein localises to the secreted. Functionally, key player in the regulation of energy balance and body weight control. Once released into the circulation, has central and peripheral effects by binding LEPR, found in many tissues, which results in the activation of several major signaling pathways. In the hypothalamus, acts as an appetite-regulating factor that induces a decrease in food intake and an increase in energy consumption by inducing anorexinogenic factors and suppressing orexigenic neuropeptides, also regulates bone mass and secretion of hypothalamo-pituitary-adrenal hormones. In the periphery, increases basal metabolism, influences reproductive function, regulates pancreatic beta-cell function and insulin secretion, is pro-angiogenic for endothelial cell and affects innate and adaptive immunity. In the arcuate nucleus of the hypothalamus, activates by depolarization POMC neurons inducing FOS and SOCS3 expression to release anorexigenic peptides and inhibits by hyperpolarization NPY neurons inducing SOCS3 with a consequent reduction on release of orexigenic peptides. In addition to its known satiety inducing effect, has a modulatory role in nutrient absorption. In the intestine, reduces glucose absorption by enterocytes by activating PKC and leading to a sequential activation of p38, PI3K and ERK signaling pathways which exerts an inhibitory effect on glucose absorption. Acts as a growth factor on certain tissues, through the activation of different signaling pathways increases expression of genes involved in cell cycle regulation such as CCND1, via JAK2-STAT3 pathway, or VEGFA, via MAPK1/3 and PI3K-AKT1 pathways. May also play an apoptotic role via JAK2-STAT3 pathway and up-regulation of BIRC5 expression. Pro-angiogenic, has mitogenic activity on vascular endothelial cells and plays a role in matrix remodeling by regulating the expression of matrix metalloproteinases (MMPs) and tissue inhibitors of metalloproteinases (TIMPs). In innate immunity, modulates the activity and function of neutrophils by increasing chemotaxis and the secretion of oxygen radicals. Increases phagocytosis by macrophages and enhances secretion of pro-inflammatory mediators. Increases cytotoxic ability of NK cells. Plays a pro-inflammatory role, in synergy with IL1B, by inducing NOS2 which promotes the production of IL6, IL8 and Prostaglandin E2, through a signaling pathway that involves JAK2, PI3K, MAP2K1/MEK1 and MAPK14/p38. In adaptive immunity, promotes the switch of memory T-cells towards T helper-1 cell immune responses. Increases CD4(+)CD25(-) T-cell proliferation and reduces autophagy during TCR (T-cell receptor) stimulation, through MTOR signaling pathway activation and BCL2 up-regulation. The protein is Leptin (LEP) of Bubalus bubalis (Domestic water buffalo).